We begin with the raw amino-acid sequence, 687 residues long: Dictomallein (687 aa).

2 disordered regions span residues 1–45 (MGNG…SRRL) and 73–112 (TAGGAAPLTPAVASPAGPTGSTPGSTPGATTAPAPSSTSA). Positions 233-501 (PVFGTDADVQ…QAWIASRVLA (269 aa)) constitute a Peptidase M66 domain. His393 serves as a coordination point for Zn(2+). Glu394 is an active-site residue. His397 and His403 together coordinate Zn(2+).

It belongs to the dictomallein family. Requires Zn(2+) as cofactor.

The polypeptide is Dictomallein (dtmL) (Burkholderia pseudomallei (strain 668)).